Here is a 333-residue protein sequence, read N- to C-terminus: Probable cytosolic iron-sulfur protein assembly protein 1 (333 aa).

WD repeat units follow at residues 12-50 (LHDD…IIEE), 55-94 (AHKK…YNDE), 107-146 (GHEN…EEFE), 153-192 (EHSQ…WECC), 197-238 (GHEG…GEYE), 250-288 (AHTR…WIVE), and 298-333 (YETN…FDEN).

It belongs to the WD repeat CIA1 family. In terms of assembly, interacts with NAR1.

It localises to the cytoplasm. The protein resides in the nucleus. Essential component of the cytosolic iron-sulfur (Fe/S) protein assembly machinery. Required for the maturation of extramitochondrial Fe/S proteins. In Kluyveromyces lactis (strain ATCC 8585 / CBS 2359 / DSM 70799 / NBRC 1267 / NRRL Y-1140 / WM37) (Yeast), this protein is Probable cytosolic iron-sulfur protein assembly protein 1.